The primary structure comprises 135 residues: Large ribosomal subunit protein uL16m (135 aa).

Belongs to the universal ribosomal protein uL16 family.

The protein resides in the mitochondrion. This is Large ribosomal subunit protein uL16m (RPL16) from Marchantia polymorpha (Common liverwort).